A 373-amino-acid chain; its full sequence is Zinc finger protein CONSTANS-LIKE 10 (373 aa).

Zn(2+) contacts are provided by C5, C8, C28, H33, C48, C51, C71, and H76. The B box-type 1; atypical zinc finger occupies 5 to 47 (CDFCGEQRSMVYCRSDAACLCLSCDRNVHSANALSKRHSRTLV). Residues 48–92 (CERCNAQPASVRCSDERVSLCQNCDWSGHDGKNSTTTSHHKRQTI) form a B box-type 2; atypical zinc finger. Residues 152-172 (PETSSAAQGMDHSSVPENSSM) form a disordered region. The region spanning 316–358 (RNNAVMRYKEKKKARKFDKRVRYVSRKERADVRRRVKGRFVKS) is the CCT domain.

The protein belongs to the CONSTANS family.

It is found in the nucleus. This Arabidopsis thaliana (Mouse-ear cress) protein is Zinc finger protein CONSTANS-LIKE 10 (COL10).